Here is a 155-residue protein sequence, read N- to C-terminus: Ribosomal RNA large subunit methyltransferase H (155 aa).

Residues Leu72, Gly103, and 122 to 127 (LSPLTL) each bind S-adenosyl-L-methionine.

It belongs to the RNA methyltransferase RlmH family. In terms of assembly, homodimer.

Its subcellular location is the cytoplasm. The catalysed reaction is pseudouridine(1915) in 23S rRNA + S-adenosyl-L-methionine = N(3)-methylpseudouridine(1915) in 23S rRNA + S-adenosyl-L-homocysteine + H(+). In terms of biological role, specifically methylates the pseudouridine at position 1915 (m3Psi1915) in 23S rRNA. The chain is Ribosomal RNA large subunit methyltransferase H from Histophilus somni (strain 2336) (Haemophilus somnus).